Reading from the N-terminus, the 214-residue chain is Glutathione S-transferase F12 (214 aa).

The GST N-terminal domain occupies 2-82 (VVKLYGQVTA…YYATKFADQG (81 aa)). Residues 11–12 (AA), 40–41 (QK), 53–54 (QV), and 66–67 (ES) contribute to the glutathione site. The GST C-terminal domain maps to 89–214 (SLEHRAIVDQ…WKKLMVLAGH (126 aa)).

It belongs to the GST superfamily. Phi family.

It is found in the cytoplasm. It localises to the cytosol. It carries out the reaction RX + glutathione = an S-substituted glutathione + a halide anion + H(+). Functionally, involved in the transport and/or accumulation of both anthocyanins and proanthocyanidins (PA)s in the vacuole. Functions in the cytosol to maintain the regular accumulation in the vacuole of PA precursors, such as epicatechin and glycosylated epicatechin. The protein is Glutathione S-transferase F12 of Arabidopsis thaliana (Mouse-ear cress).